Consider the following 243-residue polypeptide: Phosphoadenosine 5'-phosphosulfate reductase (243 aa).

The Nucleophile; cysteine thiosulfonate intermediate role is filled by Cys-239.

This sequence belongs to the PAPS reductase family. CysH subfamily.

The protein resides in the cytoplasm. It catalyses the reaction [thioredoxin]-disulfide + sulfite + adenosine 3',5'-bisphosphate + 2 H(+) = [thioredoxin]-dithiol + 3'-phosphoadenylyl sulfate. Its pathway is sulfur metabolism; hydrogen sulfide biosynthesis; sulfite from sulfate: step 3/3. Catalyzes the formation of sulfite from phosphoadenosine 5'-phosphosulfate (PAPS) using thioredoxin as an electron donor. The chain is Phosphoadenosine 5'-phosphosulfate reductase from Erwinia tasmaniensis (strain DSM 17950 / CFBP 7177 / CIP 109463 / NCPPB 4357 / Et1/99).